Here is a 215-residue protein sequence, read N- to C-terminus: Ankyrin repeat domain-containing protein 49 (215 aa).

ANK repeat units lie at residues Asp-81 to Ala-110 and Leu-114 to Ala-143.

Interacts with Bdbt; interaction promotes the stability of both complex members.

The protein resides in the cytoplasm. Its subcellular location is the cytosol. It is found in the cell membrane. Functionally, required for regulating the establishment of planar cell polarity in the wing. Forms a complex with Bdbt which likely functions in the regulation of planar polarity by promoting the activity of Dco during planar polarity establishment. Within the complex, probably functions to stabilize Bdbt, while Bdbt directly promotes Dco activity in regulating phosphorylation of core proteins such as dsh, and asymmetric localization. The sequence is that of Ankyrin repeat domain-containing protein 49 from Drosophila melanogaster (Fruit fly).